A 1216-amino-acid polypeptide reads, in one-letter code: Protein WWC3 (1216 aa).

Positions 1–63 are disordered; the sequence is MPWLSGGRRR…RESAELPLPA (63 aa). Residues 21–51 show a composition bias toward pro residues; that stretch reads EPPPSAQPQREPPPAPPAAVPTPPAPSAPPP. WW domains are found at residues 59-92 and 106-139; these read LPLP…DPRD and DELP…DPRE. 2 coiled-coil regions span residues 164-250 and 354-468; these read KEIY…TLQE and DRVR…EATR. Disordered stretches follow at residues 487 to 508, 546 to 612, and 634 to 668; these read VSSG…SSRG, GRDA…ADSC, and DLPG…VGGT. Residues 570 to 598 show a composition bias toward low complexity; sequence PQSLASLSSRSSLSSLSPPSSPLDTPFLP. The 126-residue stretch at 722–847 folds into the C2 domain; that stretch reads SNGDPQIHVG…SLSEMQLRWH (126 aa). Residues 885 to 936 adopt a coiled-coil conformation; that stretch reads DAVTVLLARTTAQLQAVERELAEERAKLEYTEEEVLEMERKEEQAEAISERS. The interval 1060–1079 is interaction with PRKCZ; that stretch reads SPFVRNTLERRTLRYKQSCR. Residues 1091-1160 are a coiled coil; that stretch reads LDLELDLQAS…RQTRQTKLDY (70 aa).

It belongs to the WWC family. As to quaternary structure, forms homodimers and heterodimers with WWC1 and WWC2. Interacts with DLC1 and PRKCZ. Interacts (via WW domains) with LATS1 and LATS2.

It localises to the cytoplasm. The protein localises to the cytosol. Regulator of the Hippo signaling pathway, also known as the Salvador-Warts-Hippo (SWH) pathway. Enhances phosphorylation of LATS1 and YAP1 and negatively regulates cell proliferation and organ growth due to a suppression of the transcriptional activity of YAP1, the major effector of the Hippo pathway. This is Protein WWC3 from Homo sapiens (Human).